The sequence spans 177 residues: MSRVGKKPVTVPSGVTATVEGQTVKMKGPKGQLQFVVHDDVDVKFEDGAVKVAPRHETNRARALYGTARAQIANLVEGVTKGFEKKLEITGVGYRAAMQGKKLQLALGYSHDVLYDIPEGITITVPKPTEINVVGIDPQKVGQVAAEIRDYRPPEPYKGKGVRYADEFIFRKEGKKK.

As to quaternary structure, part of the 50S ribosomal subunit.

This protein binds to the 23S rRNA, and is important in its secondary structure. It is located near the subunit interface in the base of the L7/L12 stalk, and near the tRNA binding site of the peptidyltransferase center. In Rhodopseudomonas palustris (strain ATCC BAA-98 / CGA009), this protein is Large ribosomal subunit protein uL6.